The primary structure comprises 443 residues: Probable D-serine dehydratase (443 aa).

Position 116 is an N6-(pyridoxal phosphate)lysine (Lys116).

Belongs to the serine/threonine dehydratase family. DsdA subfamily. Pyridoxal 5'-phosphate is required as a cofactor.

The catalysed reaction is D-serine = pyruvate + NH4(+). In Bacillus cereus (strain ATCC 14579 / DSM 31 / CCUG 7414 / JCM 2152 / NBRC 15305 / NCIMB 9373 / NCTC 2599 / NRRL B-3711), this protein is Probable D-serine dehydratase.